Here is a 227-residue protein sequence, read N- to C-terminus: 2-C-methyl-D-erythritol 4-phosphate cytidylyltransferase (227 aa).

This sequence belongs to the IspD/TarI cytidylyltransferase family. IspD subfamily.

The catalysed reaction is 2-C-methyl-D-erythritol 4-phosphate + CTP + H(+) = 4-CDP-2-C-methyl-D-erythritol + diphosphate. Its pathway is isoprenoid biosynthesis; isopentenyl diphosphate biosynthesis via DXP pathway; isopentenyl diphosphate from 1-deoxy-D-xylulose 5-phosphate: step 2/6. Functionally, catalyzes the formation of 4-diphosphocytidyl-2-C-methyl-D-erythritol from CTP and 2-C-methyl-D-erythritol 4-phosphate (MEP). In Mycobacterium marinum (strain ATCC BAA-535 / M), this protein is 2-C-methyl-D-erythritol 4-phosphate cytidylyltransferase.